A 523-amino-acid chain; its full sequence is Calcium and calcium/calmodulin-dependent serine/threonine-protein kinase DMI-3 (523 aa).

A Protein kinase domain is found at 12–306 (YEVSEILGRG…ALELLSDPWV (295 aa)). ATP contacts are provided by residues 18 to 26 (LGRGGFSVV) and K47. Catalysis depends on D171, which acts as the Proton acceptor. T271 carries the phosphothreonine modification. The calmodulin-binding stretch occupies residues 329–342 (ARRKLRAAAIASVW). 3 EF-hand domains span residues 400–435 (SLIP…LKNS), 436–471 (KGED…LPYD), and 478–513 (TEPG…DSSL). Ca(2+)-binding residues include D413, N415, D417, T419, E424, D449, D451, S453, C455, E460, D491, N493, D495, K497, and E502.

The protein belongs to the protein kinase superfamily. CAMK Ser/Thr protein kinase family. CaMK subfamily. In terms of assembly, interacts with IPD3. Autophosphorylation. Highly expressed in roots. Expressed in root hairs and nodules. Expressed at low levels in flowers. Not detected in leaves or stems.

The protein resides in the nucleus. It carries out the reaction L-seryl-[protein] + ATP = O-phospho-L-seryl-[protein] + ADP + H(+). It catalyses the reaction L-threonyl-[protein] + ATP = O-phospho-L-threonyl-[protein] + ADP + H(+). With respect to regulation, activated by calcium. Autophosphorylation may play an important role in the regulation of the kinase activity. Its function is as follows. During nodulation, plays a central role in bacterial infection and contributes to nodule organogenesis. Protein kinase that recognizes the calcium spiking induced by Nod factors and translates this signal to components controlling nodulation and mycorrhizal infection responses. May phosphorylate the NSP1 protein. Required in epidermal and cortical cells to promote infection thread (IT) formation in root hairs. The chain is Calcium and calcium/calmodulin-dependent serine/threonine-protein kinase DMI-3 from Medicago truncatula (Barrel medic).